The sequence spans 407 residues: Digeranylgeranylglycerophospholipid reductase (407 aa).

FAD contacts are provided by Ala15, Glu34, Cys45, Ala46, Gly48, Arg99, Ala123, Asp281, Gly293, and Ile294.

Belongs to the geranylgeranyl reductase family. DGGGPL reductase subfamily. FAD is required as a cofactor.

It carries out the reaction a 2,3-bis-O-phytanyl-sn-glycerol 1-phospholipid + 8 oxidized 2[4Fe-4S]-[ferredoxin] = a 2,3-bis-O-(geranylgeranyl)-sn-glycerol 1-phospholipid + 8 reduced 2[4Fe-4S]-[ferredoxin] + 16 H(+). It catalyses the reaction 2,3-bis-O-(phytanyl)-sn-glycerol 1-phosphate + 8 oxidized 2[4Fe-4S]-[ferredoxin] = 2,3-bis-O-(geranylgeranyl)-sn-glycerol 1-phosphate + 8 reduced 2[4Fe-4S]-[ferredoxin] + 16 H(+). The enzyme catalyses a 2,3-bis-O-phytanyl-sn-glycerol 1-phospholipid + 8 A = a 2,3-bis-O-(geranylgeranyl)-sn-glycerol 1-phospholipid + 8 AH2. The catalysed reaction is CDP-2,3-bis-O-(geranylgeranyl)-sn-glycerol + 8 AH2 = CDP-2,3-bis-O-(phytanyl)-sn-glycerol + 8 A. It carries out the reaction archaetidylserine + 8 AH2 = 2,3-bis-O-phytanyl-sn-glycero-3-phospho-L-serine + 8 A. The protein operates within membrane lipid metabolism; glycerophospholipid metabolism. In terms of biological role, is involved in the reduction of 2,3-digeranylgeranylglycerophospholipids (unsaturated archaeols) into 2,3-diphytanylglycerophospholipids (saturated archaeols) in the biosynthesis of archaeal membrane lipids. Catalyzes the formation of archaetidic acid (2,3-di-O-phytanyl-sn-glyceryl phosphate) from 2,3-di-O-geranylgeranylglyceryl phosphate (DGGGP) via the hydrogenation of each double bond of the isoprenoid chains. Requires the adjacently encoded ferredoxin MA_1485 as the electron donor. Is also probably able to reduce double bonds of geranyl groups in CDP-2,3-bis-O-(geranylgeranyl)-sn-glycerol and archaetidylserine, thus acting at various stages in the biosynthesis of archaeal membrane lipids. This Methanosarcina acetivorans (strain ATCC 35395 / DSM 2834 / JCM 12185 / C2A) protein is Digeranylgeranylglycerophospholipid reductase.